The primary structure comprises 165 residues: Neurotrophin-3 (165 aa).

The N-terminal stretch at 1 to 3 (IQS) is a signal peptide. A propeptide spanning residues 4–119 (TSMDQGSLSE…VLNQTSRRKR (116 aa)) is cleaved from the precursor. Asn112 carries an N-linked (GlcNAc...) asparagine glycan.

This sequence belongs to the NGF-beta family.

The protein localises to the secreted. Seems to promote the survival of visceral and proprioceptive sensory neurons. This is Neurotrophin-3 (NTF3) from Morelia spilota (Carpet python).